We begin with the raw amino-acid sequence, 303 residues long: Sulfate adenylyltransferase subunit 2 (303 aa).

This sequence belongs to the PAPS reductase family. CysD subfamily. In terms of assembly, heterodimer composed of CysD, the smaller subunit, and CysN.

The catalysed reaction is sulfate + ATP + H(+) = adenosine 5'-phosphosulfate + diphosphate. It participates in sulfur metabolism; hydrogen sulfide biosynthesis; sulfite from sulfate: step 1/3. Functionally, with CysN forms the ATP sulfurylase (ATPS) that catalyzes the adenylation of sulfate producing adenosine 5'-phosphosulfate (APS) and diphosphate, the first enzymatic step in sulfur assimilation pathway. APS synthesis involves the formation of a high-energy phosphoric-sulfuric acid anhydride bond driven by GTP hydrolysis by CysN coupled to ATP hydrolysis by CysD. The chain is Sulfate adenylyltransferase subunit 2 from Phocaeicola vulgatus (strain ATCC 8482 / DSM 1447 / JCM 5826 / CCUG 4940 / NBRC 14291 / NCTC 11154) (Bacteroides vulgatus).